A 932-amino-acid polypeptide reads, in one-letter code: UPF0182 protein Syncc9902_1151 (932 aa).

The next 9 helical transmembrane spans lie at 4–24 (FLWI…VEWV), 40–60 (MLQL…VLWL), 85–105 (VLMV…DLAI), 124–144 (MASE…VSLC), 151–171 (WVAV…WGVW), 201–221 (IQLG…HAVW), 243–263 (YRWL…LVWL), 293–313 (LLAF…IGHL), and 315–335 (RLLL…TPLT).

This sequence belongs to the UPF0182 family.

It localises to the cell membrane. In Synechococcus sp. (strain CC9902), this protein is UPF0182 protein Syncc9902_1151.